We begin with the raw amino-acid sequence, 544 residues long: Coiled-coil domain-containing protein 82 (544 aa).

A compositionally biased stretch (basic residues) spans 1–14 (MIHVRRHETRRNSK). The disordered stretch occupies residues 1-294 (MIHVRRHETR…ESDEDGDDYI (294 aa)). Residues 16–27 (HVPEQKSRVDWR) are compositionally biased toward basic and acidic residues. Over residues 39–67 (DSDEELDSEEFDSDEELDSDESFENDEEL) the composition is skewed to acidic residues. Phosphoserine occurs at positions 88, 131, 154, 195, and 219. A compositionally biased stretch (polar residues) spans 88–108 (SKIQSEGNDSKCLINSGNGST). The span at 112–132 (ETNKIKHRNIDLQDQEKHLSQ) shows a compositional bias: basic and acidic residues. The span at 223–248 (MEQKTPEKTLAAQKREKLQKLKELSK) shows a compositional bias: basic and acidic residues. Thr-227 carries the post-translational modification Phosphothreonine. The stretch at 229-256 (EKTLAAQKREKLQKLKELSKQRSRQRRS) forms a coiled coil. The segment covering 273 to 294 (DEVDEEEEEDNYESDEDGDDYI) has biased composition (acidic residues). Ser-329 carries the post-translational modification Phosphoserine.

This chain is Coiled-coil domain-containing protein 82 (CCDC82), found in Homo sapiens (Human).